The sequence spans 231 residues: Flagellar L-ring protein 2 (231 aa).

An N-terminal signal peptide occupies residues 1–15; sequence MKNLILILPLLMLTG. Residue C16 is the site of N-palmitoyl cysteine attachment. C16 carries S-diacylglycerol cysteine lipidation. Positions 30-54 are disordered; sequence SPVGSGLRTQADPIPVTPRMRTPVS.

Belongs to the FlgH family. The basal body constitutes a major portion of the flagellar organelle and consists of four rings (L,P,S, and M) mounted on a central rod.

It is found in the cell outer membrane. The protein resides in the bacterial flagellum basal body. Functionally, assembles around the rod to form the L-ring and probably protects the motor/basal body from shearing forces during rotation. The chain is Flagellar L-ring protein 2 from Bradyrhizobium diazoefficiens (strain JCM 10833 / BCRC 13528 / IAM 13628 / NBRC 14792 / USDA 110).